A 129-amino-acid polypeptide reads, in one-letter code: Ribosome-binding factor A (129 aa).

This sequence belongs to the RbfA family. Monomer. Binds 30S ribosomal subunits, but not 50S ribosomal subunits or 70S ribosomes.

It localises to the cytoplasm. Its function is as follows. One of several proteins that assist in the late maturation steps of the functional core of the 30S ribosomal subunit. Associates with free 30S ribosomal subunits (but not with 30S subunits that are part of 70S ribosomes or polysomes). Required for efficient processing of 16S rRNA. May interact with the 5'-terminal helix region of 16S rRNA. The sequence is that of Ribosome-binding factor A from Stutzerimonas stutzeri (strain A1501) (Pseudomonas stutzeri).